The sequence spans 174 residues: Small ribosomal subunit protein uS5c (174 aa).

Residues 17-80 enclose the S5 DRBM domain; the sequence is WEERVVQVKR…TDAKKHLVTV (64 aa).

The protein belongs to the universal ribosomal protein uS5 family. As to quaternary structure, part of the 30S ribosomal subunit. Contacts protein S4.

It localises to the plastid. The protein localises to the chloroplast. With S4 and S12 plays an important role in translational accuracy. This chain is Small ribosomal subunit protein uS5c (rps5), found in Porphyra purpurea (Red seaweed).